Reading from the N-terminus, the 437-residue chain is Arginine biosynthesis bifunctional protein ArgJ, mitochondrial (437 aa).

Positions 173, 200, 211, 297, 432, and 437 each coordinate substrate. Thr-211 (nucleophile) is an active-site residue.

This sequence belongs to the ArgJ family. As to quaternary structure, heterodimer of an alpha and a beta chain. In terms of processing, the alpha and beta chains are autoproteolytically processed from a single precursor protein within the mitochondrion.

Its subcellular location is the mitochondrion matrix. It catalyses the reaction N(2)-acetyl-L-ornithine + L-glutamate = N-acetyl-L-glutamate + L-ornithine. It carries out the reaction L-glutamate + acetyl-CoA = N-acetyl-L-glutamate + CoA + H(+). Its pathway is amino-acid biosynthesis; L-arginine biosynthesis; L-ornithine and N-acetyl-L-glutamate from L-glutamate and N(2)-acetyl-L-ornithine (cyclic): step 1/1. It functions in the pathway amino-acid biosynthesis; L-arginine biosynthesis; N(2)-acetyl-L-ornithine from L-glutamate: step 1/4. Its function is as follows. Catalyzes two activities which are involved in the cyclic version of arginine biosynthesis: the synthesis of acetylglutamate from glutamate and acetyl-CoA, and of ornithine by transacetylation between acetylornithine and glutamate. The sequence is that of Arginine biosynthesis bifunctional protein ArgJ, mitochondrial from Zygosaccharomyces rouxii (strain ATCC 2623 / CBS 732 / NBRC 1130 / NCYC 568 / NRRL Y-229).